We begin with the raw amino-acid sequence, 112 residues long: Large ribosomal subunit protein bL17 (112 aa).

The protein belongs to the bacterial ribosomal protein bL17 family. In terms of assembly, part of the 50S ribosomal subunit. Contacts protein L32.

The protein is Large ribosomal subunit protein bL17 of Thermoanaerobacter pseudethanolicus (strain ATCC 33223 / 39E) (Clostridium thermohydrosulfuricum).